The primary structure comprises 442 residues: Coiled-coil domain-containing protein 112 (442 aa).

Coiled coils occupy residues 23–116 and 217–249; these read LEEL…RRIE and LEEK…VDTV. Disordered regions lie at residues 245–272, 289–312, and 392–442; these read KVDT…KKQK, KLAS…QRQS, and EKVE…RQGI. 2 stretches are compositionally biased toward basic and acidic residues: residues 256-268 and 294-310; these read KAED…EEQR and LREE…ERQR. Residues 281-400 adopt a coiled-coil conformation; the sequence is RKSLEMSAKL…KEKVENNVSR (120 aa).

It is found in the cytoplasm. The protein localises to the cytoskeleton. It localises to the microtubule organizing center. Its subcellular location is the centrosome. The protein resides in the centriolar satellite. This Mus musculus (Mouse) protein is Coiled-coil domain-containing protein 112 (Ccdc112).